The chain runs to 274 residues: Large ribosomal subunit protein bL28m (274 aa).

Residues 249–274 (SETEEFGLGQEEDLFMKEEPKPTKMA) form a disordered region. Over residues 262–274 (LFMKEEPKPTKMA) the composition is skewed to basic and acidic residues.

It belongs to the bacterial ribosomal protein bL28 family. In terms of assembly, component of the mitochondrial large ribosomal subunit (mt-LSU). Mature N.crassa 74S mitochondrial ribosomes consist of a small (37S) and a large (54S) subunit. The 37S small subunit contains a 16S ribosomal RNA (16S mt-rRNA) and 32 different proteins. The 54S large subunit contains a 23S rRNA (23S mt-rRNA) and 42 different proteins.

The protein resides in the mitochondrion. Its function is as follows. Component of the mitochondrial ribosome (mitoribosome), a dedicated translation machinery responsible for the synthesis of mitochondrial genome-encoded proteins, including at least some of the essential transmembrane subunits of the mitochondrial respiratory chain. The mitoribosomes are attached to the mitochondrial inner membrane and translation products are cotranslationally integrated into the membrane. This chain is Large ribosomal subunit protein bL28m (mrpl24), found in Neurospora crassa (strain ATCC 24698 / 74-OR23-1A / CBS 708.71 / DSM 1257 / FGSC 987).